The chain runs to 189 residues: Elongation factor P (189 aa).

This sequence belongs to the elongation factor P family.

Its subcellular location is the cytoplasm. It functions in the pathway protein biosynthesis; polypeptide chain elongation. In terms of biological role, involved in peptide bond synthesis. Stimulates efficient translation and peptide-bond synthesis on native or reconstituted 70S ribosomes in vitro. Probably functions indirectly by altering the affinity of the ribosome for aminoacyl-tRNA, thus increasing their reactivity as acceptors for peptidyl transferase. The polypeptide is Elongation factor P (Pseudomonas syringae pv. syringae (strain B728a)).